The primary structure comprises 138 residues: Putative pre-16S rRNA nuclease (138 aa).

Belongs to the YqgF nuclease family.

The protein resides in the cytoplasm. Its function is as follows. Could be a nuclease involved in processing of the 5'-end of pre-16S rRNA. The polypeptide is Putative pre-16S rRNA nuclease (Polaromonas sp. (strain JS666 / ATCC BAA-500)).